We begin with the raw amino-acid sequence, 192 residues long: Elongation factor P (192 aa).

Belongs to the elongation factor P family.

It localises to the cytoplasm. It functions in the pathway protein biosynthesis; polypeptide chain elongation. Functionally, involved in peptide bond synthesis. Stimulates efficient translation and peptide-bond synthesis on native or reconstituted 70S ribosomes in vitro. Probably functions indirectly by altering the affinity of the ribosome for aminoacyl-tRNA, thus increasing their reactivity as acceptors for peptidyl transferase. In Borreliella burgdorferi (strain ATCC 35210 / DSM 4680 / CIP 102532 / B31) (Borrelia burgdorferi), this protein is Elongation factor P (efp).